The sequence spans 486 residues: Envelope glycoprotein gp63 (486 aa).

A signal peptide spans 1–18 (MGNVFFLLLFSLTHFPLA). Topologically, residues 19 to 438 (QQSRCTLTIG…LGLSQWAREA (420 aa)) are extracellular. N-linked (GlcNAc...) asparagine; by host glycosylation is found at Asn136 and Asn218. A CXXC motif is present at residues 221–224 (CMVC). 3 disulfides stabilise this stretch: Cys221/Cys224, Cys221/Cys397, and Cys389/Cys396. 2 N-linked (GlcNAc...) asparagine; by host glycosylation sites follow: Asn240 and Asn286. Residues 309–329 (AVPIAVWLVSALAAGTGIAGG) are fusion peptide. 2 coiled-coil regions span residues 337–383 (ASSK…LLFW) and 393–425 (QEQC…GWGL). An immunosuppression region spans residues 372-388 (AQNRRGLDLLFWEQGGL). Residues 389–397 (CKAIQEQCC) carry the CX6CC motif. N-linked (GlcNAc...) asparagine; by host glycosylation occurs at Asn400. Residues 439-459 (LQTGITILALLLLVILFGPCI) form a helical membrane-spanning segment. Cys458 carries S-palmitoyl cysteine; by host lipidation. Residues 460–486 (LRQIQALPQRLQNRHNQYSLINPETML) are Cytoplasmic-facing.

In terms of assembly, the mature envelope protein (Env) consists of a trimer of SU-TM heterodimers attached by a labile interchain disulfide bond. Specific enzymatic cleavages in vivo yield mature proteins. Envelope glycoproteins are synthesized as an inactive precursor that is N-glycosylated and processed likely by host cell furin or by a furin-like protease in the Golgi to yield the mature SU and TM proteins. The cleavage site between SU and TM requires the minimal sequence [KR]-X-[KR]-R. In terms of processing, the CXXC motif is highly conserved across a broad range of retroviral envelope proteins. It is thought to participate in the formation of a labile disulfide bond possibly with the CX6CC motif present in the transmembrane protein. Isomerization of the intersubunit disulfide bond to an SU intrachain disulfide bond is thought to occur upon receptor recognition in order to allow membrane fusion. Post-translationally, the transmembrane protein is palmitoylated.

The protein localises to the virion membrane. Its subcellular location is the host cell membrane. In terms of biological role, the surface protein (SU) attaches the virus to the host cell by binding to its receptor. This interaction triggers the refolding of the transmembrane protein (TM) and is thought to activate its fusogenic potential by unmasking its fusion peptide. Fusion occurs at the host cell plasma membrane. The transmembrane protein (TM) acts as a class I viral fusion protein. Under the current model, the protein has at least 3 conformational states: pre-fusion native state, pre-hairpin intermediate state, and post-fusion hairpin state. During viral and target cell membrane fusion, the coiled coil regions (heptad repeats) assume a trimer-of-hairpins structure, positioning the fusion peptide in close proximity to the C-terminal region of the ectodomain. The formation of this structure appears to drive apposition and subsequent fusion of viral and target cell membranes. Membranes fusion leads to delivery of the nucleocapsid into the cytoplasm. This chain is Envelope glycoprotein gp63 (env), found in Homo sapiens (Human).